The sequence spans 251 residues: 4-hydroxy-tetrahydrodipicolinate reductase (251 aa).

Residues Gly-9–Met-14, Ala-85–Thr-87, and Ser-109–Met-112 each bind NAD(+). His-141 functions as the Proton donor/acceptor in the catalytic mechanism. His-142 is a (S)-2,3,4,5-tetrahydrodipicolinate binding site. Lys-145 functions as the Proton donor in the catalytic mechanism. (S)-2,3,4,5-tetrahydrodipicolinate is bound at residue Gly-151–Thr-152.

This sequence belongs to the DapB family.

The protein resides in the cytoplasm. The catalysed reaction is (S)-2,3,4,5-tetrahydrodipicolinate + NAD(+) + H2O = (2S,4S)-4-hydroxy-2,3,4,5-tetrahydrodipicolinate + NADH + H(+). It carries out the reaction (S)-2,3,4,5-tetrahydrodipicolinate + NADP(+) + H2O = (2S,4S)-4-hydroxy-2,3,4,5-tetrahydrodipicolinate + NADPH + H(+). It functions in the pathway amino-acid biosynthesis; L-lysine biosynthesis via DAP pathway; (S)-tetrahydrodipicolinate from L-aspartate: step 4/4. Catalyzes the conversion of 4-hydroxy-tetrahydrodipicolinate (HTPA) to tetrahydrodipicolinate. The polypeptide is 4-hydroxy-tetrahydrodipicolinate reductase (Caldanaerobacter subterraneus subsp. tengcongensis (strain DSM 15242 / JCM 11007 / NBRC 100824 / MB4) (Thermoanaerobacter tengcongensis)).